The following is a 64-amino-acid chain: DNA gyrase inhibitor YacG (64 aa).

Zn(2+) is bound by residues cysteine 10, cysteine 13, cysteine 29, and cysteine 33.

The protein belongs to the DNA gyrase inhibitor YacG family. In terms of assembly, interacts with GyrB. Zn(2+) is required as a cofactor.

Functionally, inhibits all the catalytic activities of DNA gyrase by preventing its interaction with DNA. Acts by binding directly to the C-terminal domain of GyrB, which probably disrupts DNA binding by the gyrase. This is DNA gyrase inhibitor YacG from Pectobacterium atrosepticum (strain SCRI 1043 / ATCC BAA-672) (Erwinia carotovora subsp. atroseptica).